A 411-amino-acid polypeptide reads, in one-letter code: MLDLKNLQNNFDEVTKKLKSKKVDENILKKLAELFASLKKEKTALEEFQAFQNKFSKELATAEDKESLKAKLSENKSKINEQSTKVNVLENELEEIAHAIPNIPDECVPVGEDENENVELKKVLNPPSFDFTPKEHFELGESLNWLDFVRGVKISQSRFCVLKNEGALLSRALVNYMIDFNRSRGFEFVNVPFLVNGATMFGTGQLPKFKEDMYKVDDEDLYLISTSEIPITNLYSGEILTSETLPIKMTCYSACFRKEAGSAGRDTRGIIRQHQFEKVELVSITKPEQSDSVFNEMLECASDLLSSLGLAHRHLMLCTGDLGFSAAKTVDLEVWLPGQNKYREISSVSNCRDFQARRAKIRYKNEQGKNELVHTLNGSSLAVGRTLVAIMENYQDKEGKIHIPDALKKYF.

Residue 226–228 participates in L-serine binding; it reads TSE. An ATP-binding site is contributed by 257–259; sequence RKE. Residue E280 coordinates L-serine. 344–347 contributes to the ATP binding site; it reads EISS. Position 379 (S379) interacts with L-serine.

Belongs to the class-II aminoacyl-tRNA synthetase family. Type-1 seryl-tRNA synthetase subfamily. In terms of assembly, homodimer. The tRNA molecule binds across the dimer.

The protein resides in the cytoplasm. The catalysed reaction is tRNA(Ser) + L-serine + ATP = L-seryl-tRNA(Ser) + AMP + diphosphate + H(+). The enzyme catalyses tRNA(Sec) + L-serine + ATP = L-seryl-tRNA(Sec) + AMP + diphosphate + H(+). It participates in aminoacyl-tRNA biosynthesis; selenocysteinyl-tRNA(Sec) biosynthesis; L-seryl-tRNA(Sec) from L-serine and tRNA(Sec): step 1/1. In terms of biological role, catalyzes the attachment of serine to tRNA(Ser). Is also able to aminoacylate tRNA(Sec) with serine, to form the misacylated tRNA L-seryl-tRNA(Sec), which will be further converted into selenocysteinyl-tRNA(Sec). This chain is Serine--tRNA ligase, found in Campylobacter jejuni subsp. doylei (strain ATCC BAA-1458 / RM4099 / 269.97).